The sequence spans 373 residues: tRNA-specific 2-thiouridylase MnmA (373 aa).

Residues 12–19 and methionine 38 each bind ATP; that span reads GMSGGVDS. Residues 98 to 100 are interaction with target base in tRNA; the sequence is NPD. Residue cysteine 103 is the Nucleophile of the active site. Cysteine 103 and cysteine 200 form a disulfide bridge. An ATP-binding site is contributed by glycine 127. The tract at residues 150 to 152 is interaction with tRNA; sequence KDQ. Cysteine 200 functions as the Cysteine persulfide intermediate in the catalytic mechanism. The interval 312 to 313 is interaction with tRNA; it reads RY.

The protein belongs to the MnmA/TRMU family.

It is found in the cytoplasm. The enzyme catalyses S-sulfanyl-L-cysteinyl-[protein] + uridine(34) in tRNA + AH2 + ATP = 2-thiouridine(34) in tRNA + L-cysteinyl-[protein] + A + AMP + diphosphate + H(+). Catalyzes the 2-thiolation of uridine at the wobble position (U34) of tRNA, leading to the formation of s(2)U34. The polypeptide is tRNA-specific 2-thiouridylase MnmA (Streptococcus pyogenes serotype M1).